A 330-amino-acid chain; its full sequence is Beta-ketoacyl-[acyl-carrier-protein] synthase III (330 aa).

Active-site residues include C115 and H255. The segment at 256–260 is ACP-binding; sequence QANFR. Residue N285 is part of the active site.

Belongs to the thiolase-like superfamily. FabH family. As to quaternary structure, homodimer.

It is found in the cytoplasm. The catalysed reaction is malonyl-[ACP] + acetyl-CoA + H(+) = 3-oxobutanoyl-[ACP] + CO2 + CoA. It participates in lipid metabolism; fatty acid biosynthesis. In terms of biological role, catalyzes the condensation reaction of fatty acid synthesis by the addition to an acyl acceptor of two carbons from malonyl-ACP. Catalyzes the first condensation reaction which initiates fatty acid synthesis and may therefore play a role in governing the total rate of fatty acid production. Possesses both acetoacetyl-ACP synthase and acetyl transacylase activities. Its substrate specificity determines the biosynthesis of branched-chain and/or straight-chain of fatty acids. In Helicobacter pylori (strain G27), this protein is Beta-ketoacyl-[acyl-carrier-protein] synthase III.